The following is a 294-amino-acid chain: NAD kinase (294 aa).

Catalysis depends on D72, which acts as the Proton acceptor. Residues 72 to 73 (DG), 146 to 147 (ND), R157, R174, D176, 187 to 192 (TAYSLS), and Q247 each bind NAD(+).

Belongs to the NAD kinase family. Requires a divalent metal cation as cofactor.

It localises to the cytoplasm. The enzyme catalyses NAD(+) + ATP = ADP + NADP(+) + H(+). In terms of biological role, involved in the regulation of the intracellular balance of NAD and NADP, and is a key enzyme in the biosynthesis of NADP. Catalyzes specifically the phosphorylation on 2'-hydroxyl of the adenosine moiety of NAD to yield NADP. In Marinobacter nauticus (strain ATCC 700491 / DSM 11845 / VT8) (Marinobacter aquaeolei), this protein is NAD kinase.